The chain runs to 157 residues: Ribosome maturation factor RimP (157 aa).

Belongs to the RimP family.

Its subcellular location is the cytoplasm. Functionally, required for maturation of 30S ribosomal subunits. This chain is Ribosome maturation factor RimP, found in Bacillus pumilus (strain SAFR-032).